The primary structure comprises 100 residues: UPF0235 protein TC_0667 (100 aa).

The protein belongs to the UPF0235 family.

This is UPF0235 protein TC_0667 from Chlamydia muridarum (strain MoPn / Nigg).